A 437-amino-acid chain; its full sequence is Phosphomethylpyrimidine synthase (437 aa).

Substrate contacts are provided by residues asparagine 69, methionine 98, tyrosine 127, histidine 163, 185–187 (SRG), 226–229 (DACR), and glutamate 265. Residue histidine 269 coordinates Zn(2+). Position 292 (tyrosine 292) interacts with substrate. Residue histidine 333 participates in Zn(2+) binding. 3 residues coordinate [4Fe-4S] cluster: cysteine 409, cysteine 412, and cysteine 416.

It belongs to the ThiC family. [4Fe-4S] cluster is required as a cofactor.

It catalyses the reaction 5-amino-1-(5-phospho-beta-D-ribosyl)imidazole + S-adenosyl-L-methionine = 4-amino-2-methyl-5-(phosphooxymethyl)pyrimidine + CO + 5'-deoxyadenosine + formate + L-methionine + 3 H(+). Its pathway is cofactor biosynthesis; thiamine diphosphate biosynthesis. In terms of biological role, catalyzes the synthesis of the hydroxymethylpyrimidine phosphate (HMP-P) moiety of thiamine from aminoimidazole ribotide (AIR) in a radical S-adenosyl-L-methionine (SAM)-dependent reaction. The polypeptide is Phosphomethylpyrimidine synthase (Clostridium botulinum (strain 657 / Type Ba4)).